The following is a 361-amino-acid chain: Alternative oxidase, mitochondrial (361 aa).

A helical transmembrane segment spans residues 155–175 (LIRYVFLESVAGVPGMVAGML). Residues Glu162, Glu201, and His204 each coordinate Fe cation. Residues 221 to 241 (MILGAQGVFFNSFFLCYLFSP) form a helical membrane-spanning segment. Fe cation is bound by residues Glu252, Glu253, Glu309, and His312. The segment at 320 to 361 (GNLKQDEDPNPFVSEYGKERGEKPGKGIESLKPVGWERDEVI) is disordered. The segment covering 335 to 345 (YGKERGEKPGK) has biased composition (basic and acidic residues).

The protein belongs to the alternative oxidase family. The cofactor is Fe cation.

Its subcellular location is the mitochondrion inner membrane. Catalyzes cyanide-resistant oxygen consumption. May increase respiration when the cytochrome respiratory pathway is restricted, or in response to low temperatures. In Botryotinia fuckeliana (Noble rot fungus), this protein is Alternative oxidase, mitochondrial (aox).